We begin with the raw amino-acid sequence, 339 residues long: DNA-directed RNA polymerase subunit alpha (339 aa).

Residues 1 to 233 (MVREEVAGST…DLFLPFLHAE (233 aa)) are alpha N-terminal domain (alpha-NTD). The tract at residues 264-339 (KKGIPLNCIF…IDLLKNKLSF (76 aa)) is alpha C-terminal domain (alpha-CTD).

This sequence belongs to the RNA polymerase alpha chain family. As to quaternary structure, in plastids the minimal PEP RNA polymerase catalytic core is composed of four subunits: alpha, beta, beta', and beta''. When a (nuclear-encoded) sigma factor is associated with the core the holoenzyme is formed, which can initiate transcription.

It localises to the plastid. It is found in the chloroplast. It catalyses the reaction RNA(n) + a ribonucleoside 5'-triphosphate = RNA(n+1) + diphosphate. DNA-dependent RNA polymerase catalyzes the transcription of DNA into RNA using the four ribonucleoside triphosphates as substrates. This chain is DNA-directed RNA polymerase subunit alpha, found in Thinopyrum bessarabicum (Wheatgrass).